A 217-amino-acid polypeptide reads, in one-letter code: Somatotropin (217 aa).

The signal sequence occupies residues 1 to 27 (MMAAGPRASLLLAFALLCLPWTQEVGA). Histidine 46 serves as a coordination point for Zn(2+). Cysteines 79 and 190 form a disulfide. The residue at position 132 (serine 132) is a Phosphoserine. Glutamate 199 provides a ligand contact to Zn(2+). Residues cysteine 207 and cysteine 215 are joined by a disulfide bond.

Belongs to the somatotropin/prolactin family.

It localises to the secreted. Its function is as follows. Plays an important role in growth control. Its major role in stimulating body growth is to stimulate the liver and other tissues to secrete IGF1. It stimulates both the differentiation and proliferation of myoblasts. It also stimulates amino acid uptake and protein synthesis in muscle and other tissues. The protein is Somatotropin (GH1) of Cervus elaphus (Red deer).